We begin with the raw amino-acid sequence, 709 residues long: Eukaryotic translation initiation factor 3 subunit B (709 aa).

The interval 1 to 98 (MSINEEEYLR…LFIQYKNVAD (98 aa)) is sufficient for interaction with HCR1 and TIF32. Positions 1 to 221 (MSINEEEYLR…GIQAWGGADF (221 aa)) are sufficient for interaction with PIC8. The 88-residue stretch at 37 to 124 (NYVIVDGAPI…HRLLVNRLSD (88 aa)) folds into the RRM domain.

This sequence belongs to the eIF-3 subunit B family. Component of the eukaryotic translation initiation factor 3 (eIF-3) complex.

The protein localises to the cytoplasm. Its function is as follows. RNA-binding component of the eukaryotic translation initiation factor 3 (eIF-3) complex, which is involved in protein synthesis of a specialized repertoire of mRNAs and, together with other initiation factors, stimulates binding of mRNA and methionyl-tRNAi to the 40S ribosome. The eIF-3 complex specifically targets and initiates translation of a subset of mRNAs involved in cell proliferation. The protein is Eukaryotic translation initiation factor 3 subunit B of Lodderomyces elongisporus (strain ATCC 11503 / CBS 2605 / JCM 1781 / NBRC 1676 / NRRL YB-4239) (Yeast).